Reading from the N-terminus, the 82-residue chain is Envelope small membrane protein (82 aa).

Over 1–16 (MLPFVQERIGLFIVNF) the chain is Virion surface. Residues 17–37 (FIFTVVCAITLLVCMAFLTAT) form a helical membrane-spanning segment. The Intravirion segment spans residues 38 to 78 (RLCVQCMTGFNTLLVQPALYLYNTGRSVYVKFQDSKPPLPP).

It belongs to the betacoronaviruses E protein family. As to quaternary structure, homopentamer. Interacts with membrane protein M in the budding compartment of the host cell, which is located between endoplasmic reticulum and the Golgi complex. Interacts with Nucleoprotein.

The protein resides in the host Golgi apparatus membrane. Functionally, plays a central role in virus morphogenesis and assembly. Acts as a viroporin and self-assembles in host membranes forming pentameric protein-lipid pores that allow ion transport. Also plays a role in the induction of apoptosis. The chain is Envelope small membrane protein from Middle East respiratory syndrome-related coronavirus (isolate United Kingdom/H123990006/2012) (MERS-CoV).